Reading from the N-terminus, the 697-residue chain is MAR-binding filament-like protein 1 (697 aa).

Residues 1–41 (MATSCFPPFSASSSSLCSSQFTPLLSCPRNTQICRKKRPVM) constitute a chloroplast transit peptide. The N-terminal 38 residues, 42–79 (ASMHSENQKESNVCNRRSILFVGFSVLPLLNLRARALE), are a transit peptide targeting the thylakoid. Over 80 to 106 (GLSTDSQAQPQKEETEQTIQGSAGNPF) the chain is Lumenal, thylakoid. Residues 81-100 (LSTDSQAQPQKEETEQTIQG) form a disordered region. A helical membrane pass occupies residues 107 to 127 (VSLLNGLGVVGSGVLGSLYAL). The Stromal portion of the chain corresponds to 128–697 (ARNEKAVSDA…GEKEKVNVQQ (570 aa)). A coiled-coil region spans residues 203–671 (LQNEKKLAED…KGEILRLRSQ (469 aa)). The segment at 599 to 629 (TSRNSSLEDEREVHRQSVSEQKQISQEAQEN) is disordered. Over residues 604-615 (SLEDEREVHRQS) the composition is skewed to basic and acidic residues. Positions 616 to 627 (VSEQKQISQEAQ) are enriched in polar residues.

Interacts with MAF1. Interacts with PTST2; the interaction is essential for the initiation of starch granules biosynthesis in leaf chloroplasts, for the correct location of the process in the stromal spaces between the thylakoid membranes, and for the association of PTST2 with the thylakoid membranes. In terms of processing, phosphorylated in vitro by human casein kinase II. Predicted to be translocated into the thylakoid by the Tat system.

Its subcellular location is the plastid. The protein resides in the chloroplast. It is found in the chloroplast thylakoid membrane. The protein localises to the chloroplast stroma. It localises to the chloroplast nucleoid. Its subcellular location is the nucleus. The protein resides in the nucleus matrix. Required for the initiation of starch granules biosynthesis in leaf chloroplasts. Anchored to the thylakoid membranes with its C-terminus facing into the stroma where it is essential for localizing PTST2 and SS4 to the stromal spaces between the thylakoid membranes in order to begin starch granule formation. Associated with leaf chloroplastic nucleoids in vivo. Binds to various chloroplastic double-stranded DNA fragments without particular sequence specificity in vitro. May function at the interface between nucleoids and thylakoids possibly by anchoring nucleoids to the thylakoid membrane system in mature chloroplasts. Binds nuclear DNA. Interacts with chromatin via matrix attachment regions (MARs). Likely to participate in nuclear architecture by connecting chromatin with the nuclear matrix and potentially with the nuclear envelope. The sequence is that of MAR-binding filament-like protein 1 from Solanum lycopersicum (Tomato).